A 54-amino-acid polypeptide reads, in one-letter code: UPF0391 membrane protein Daro_2080 (54 aa).

The next 2 helical transmembrane spans lie at 5–25 (AIVF…GIAA) and 30–50 (IAKI…VMGF).

The protein belongs to the UPF0391 family.

It is found in the cell membrane. The protein is UPF0391 membrane protein Daro_2080 of Dechloromonas aromatica (strain RCB).